Here is a 179-residue protein sequence, read N- to C-terminus: Bifunctional protein PyrR (179 aa).

The short motif at 100-112 is the PRPP-binding element; it reads VILIDDVLFTGRT.

Belongs to the purine/pyrimidine phosphoribosyltransferase family. PyrR subfamily.

The enzyme catalyses UMP + diphosphate = 5-phospho-alpha-D-ribose 1-diphosphate + uracil. Its function is as follows. Regulates the transcription of the pyrimidine nucleotide (pyr) operon in response to exogenous pyrimidines. Also displays a weak uracil phosphoribosyltransferase activity which is not physiologically significant. This Mannheimia succiniciproducens (strain KCTC 0769BP / MBEL55E) protein is Bifunctional protein PyrR.